A 149-amino-acid polypeptide reads, in one-letter code: Large ribosomal subunit protein uL11 (149 aa).

This sequence belongs to the universal ribosomal protein uL11 family. As to quaternary structure, part of the ribosomal stalk of the 50S ribosomal subunit. Interacts with L10 and the large rRNA to form the base of the stalk. L10 forms an elongated spine to which L12 dimers bind in a sequential fashion forming a multimeric L10(L12)X complex. Post-translationally, one or more lysine residues are methylated.

In terms of biological role, forms part of the ribosomal stalk which helps the ribosome interact with GTP-bound translation factors. The chain is Large ribosomal subunit protein uL11 from Xanthobacter autotrophicus (strain ATCC BAA-1158 / Py2).